Here is a 1065-residue protein sequence, read N- to C-terminus: Carbamoyl phosphate synthase large chain (1065 aa).

Residues 1–401 are carboxyphosphate synthetic domain; it reads MPLDKTIKKV…ALLKAVTSLE (401 aa). Residues R129, R169, G175, G176, Q208, V210, E215, G241, V242, H243, Q284, and E298 each contribute to the ATP site. Residues 133–327 enclose the ATP-grasp 1 domain; it reads KNLMEEIDEP…IAKIAAKIAV (195 aa). 3 residues coordinate Mg(2+): Q284, E298, and N300. Positions 284, 298, and 300 each coordinate Mn(2+). Positions 402-548 are oligomerization domain; that stretch reads GKISGLRLEK…YSSYENEDEN (147 aa). The interval 549 to 931 is carbamoyl phosphate synthetic domain; sequence EVTDDKKIVV…AIYKGFRAAG (383 aa). The ATP-grasp 2 domain occupies 673 to 863; sequence SELLKELNIP…MVKLAVEILT (191 aa). ATP-binding residues include R709, K748, I750, E754, G779, V780, H781, S782, Q822, and E834. Q822, E834, and N836 together coordinate Mg(2+). Mn(2+) is bound by residues Q822, E834, and N836. One can recognise an MGS-like domain in the interval 932-1065; sequence IEVPKDGGNL…EYRAMKEYFK (134 aa). The segment at 932–1065 is allosteric domain; it reads IEVPKDGGNL…EYRAMKEYFK (134 aa).

The protein belongs to the CarB family. As to quaternary structure, composed of two chains; the small (or glutamine) chain promotes the hydrolysis of glutamine to ammonia, which is used by the large (or ammonia) chain to synthesize carbamoyl phosphate. Tetramer of heterodimers (alpha,beta)4. Mg(2+) is required as a cofactor. Mn(2+) serves as cofactor.

The catalysed reaction is hydrogencarbonate + L-glutamine + 2 ATP + H2O = carbamoyl phosphate + L-glutamate + 2 ADP + phosphate + 2 H(+). It catalyses the reaction hydrogencarbonate + NH4(+) + 2 ATP = carbamoyl phosphate + 2 ADP + phosphate + 2 H(+). The protein operates within amino-acid biosynthesis; L-arginine biosynthesis; carbamoyl phosphate from bicarbonate: step 1/1. Its pathway is pyrimidine metabolism; UMP biosynthesis via de novo pathway; (S)-dihydroorotate from bicarbonate: step 1/3. In terms of biological role, large subunit of the glutamine-dependent carbamoyl phosphate synthetase (CPSase). CPSase catalyzes the formation of carbamoyl phosphate from the ammonia moiety of glutamine, carbonate, and phosphate donated by ATP, constituting the first step of 2 biosynthetic pathways, one leading to arginine and/or urea and the other to pyrimidine nucleotides. The large subunit (synthetase) binds the substrates ammonia (free or transferred from glutamine from the small subunit), hydrogencarbonate and ATP and carries out an ATP-coupled ligase reaction, activating hydrogencarbonate by forming carboxy phosphate which reacts with ammonia to form carbamoyl phosphate. The polypeptide is Carbamoyl phosphate synthase large chain (Clostridium acetobutylicum (strain ATCC 824 / DSM 792 / JCM 1419 / IAM 19013 / LMG 5710 / NBRC 13948 / NRRL B-527 / VKM B-1787 / 2291 / W)).